The primary structure comprises 969 residues: RNA polymerase-associated protein RapA (969 aa).

Positions 164–334 (EVGRRHAPRV…FARLRLLDPD (171 aa)) constitute a Helicase ATP-binding domain. 177–184 (DEVGLGKT) provides a ligand contact to ATP. The DEAH box motif lies at 280–283 (DEAH). The Helicase C-terminal domain maps to 492 to 686 (RVNWLLEKVK…ELKSQLEQGR (195 aa)).

This sequence belongs to the SNF2/RAD54 helicase family. RapA subfamily. Interacts with the RNAP. Has a higher affinity for the core RNAP than for the holoenzyme. Its ATPase activity is stimulated by binding to RNAP.

Its function is as follows. Transcription regulator that activates transcription by stimulating RNA polymerase (RNAP) recycling in case of stress conditions such as supercoiled DNA or high salt concentrations. Probably acts by releasing the RNAP, when it is trapped or immobilized on tightly supercoiled DNA. Does not activate transcription on linear DNA. Probably not involved in DNA repair. The polypeptide is RNA polymerase-associated protein RapA (Vibrio parahaemolyticus serotype O3:K6 (strain RIMD 2210633)).